The following is a 346-amino-acid chain: Signal recognition particle receptor FtsY (346 aa).

Residues 143 to 150, 225 to 229, and 289 to 292 each bind GTP; these read GVNGVGKT, DTSGR, and TKMD.

It belongs to the GTP-binding SRP family. FtsY subfamily. Part of the signal recognition particle protein translocation system, which is composed of SRP and FtsY.

The protein localises to the cell membrane. Its subcellular location is the cytoplasm. The catalysed reaction is GTP + H2O = GDP + phosphate + H(+). In terms of biological role, involved in targeting and insertion of nascent membrane proteins into the cytoplasmic membrane. Acts as a receptor for the complex formed by the signal recognition particle (SRP) and the ribosome-nascent chain (RNC). This is Signal recognition particle receptor FtsY from Mycoplasma genitalium (strain ATCC 33530 / DSM 19775 / NCTC 10195 / G37) (Mycoplasmoides genitalium).